The primary structure comprises 125 residues: Nuclear envelope phosphatase-regulatory subunit 1 (125 aa).

M1 is subject to N-acetylmethionine. Transmembrane regions (helical) follow at residues 33-53 (MLLI…LIDP) and 65-85 (WNHP…FAGI).

The protein belongs to the CNEP1R1 family. As to quaternary structure, interacts with CTDNEP1; the complex dephosphorylates LPIN1 and LPIN2.

It localises to the nucleus membrane. The protein localises to the cytoplasm. In terms of biological role, forms with the serine/threonine protein phosphatase CTDNEP1 an active complex which dephosphorylates and may activate LPIN1 and LPIN2. LPIN1 and LPIN2 are phosphatidate phosphatases that catalyze the conversion of phosphatidic acid to diacylglycerol and control the metabolism of fatty acids at different levels. May indirectly modulate the lipid composition of nuclear and/or endoplasmic reticulum membranes and be required for proper nuclear membrane morphology and/or dynamics. May also indirectly regulate the production of lipid droplets and triacylglycerol. In Bos taurus (Bovine), this protein is Nuclear envelope phosphatase-regulatory subunit 1 (CNEP1R1).